We begin with the raw amino-acid sequence, 166 residues long: Short form salivary protein D7R5 (166 aa).

The first 22 residues, 1 to 22 (MEWRYFVVIALICPLIIVETLA), serve as a signal peptide directing secretion. 3 disulfides stabilise this stretch: Cys26–Cys58, Cys39–Cys166, and Cys98–Cys117.

This sequence belongs to the PBP/GOBP family.

Its subcellular location is the secreted. Functionally, in contrast to the related D7 salivary proteins, does not bind biogenic amines such as serotonin, noradrenaline, histamine and adrenaline. It is hypothesized that either D7r5 evolved an as yet unknown function or is becoming a pseudogene. This Anopheles gambiae (African malaria mosquito) protein is Short form salivary protein D7R5.